Consider the following 116-residue polypeptide: Nucleoid-associated protein PMT9312_0020 (116 aa).

It belongs to the YbaB/EbfC family. In terms of assembly, homodimer.

Its subcellular location is the cytoplasm. It localises to the nucleoid. Functionally, binds to DNA and alters its conformation. May be involved in regulation of gene expression, nucleoid organization and DNA protection. This Prochlorococcus marinus (strain MIT 9312) protein is Nucleoid-associated protein PMT9312_0020.